The chain runs to 196 residues: MKELQERIVQDGKVLSASVLKVDAFLNHQVDPQLTMKIGQRFAELFAGENITKVVTIEASGIHFAMATSFALGVPFIYAKKKKAVTLTEEVYSAPVHSFTRQETYQISVSRQYLSKEDRVLIVDDFLATGAALVGLTNIVKDAGAHLVGVGAVIEKSFQEGRGLLEQAGVRIESLARIESMSPEGIHFIEEEPARV.

Residues L20 and N27 each coordinate xanthine. A128–A132 contacts 5-phospho-alpha-D-ribose 1-diphosphate. K156 lines the xanthine pocket.

The protein belongs to the purine/pyrimidine phosphoribosyltransferase family. Xpt subfamily. As to quaternary structure, homodimer.

Its subcellular location is the cytoplasm. It catalyses the reaction XMP + diphosphate = xanthine + 5-phospho-alpha-D-ribose 1-diphosphate. Its pathway is purine metabolism; XMP biosynthesis via salvage pathway; XMP from xanthine: step 1/1. Its function is as follows. Converts the preformed base xanthine, a product of nucleic acid breakdown, to xanthosine 5'-monophosphate (XMP), so it can be reused for RNA or DNA synthesis. In Brevibacillus brevis (strain 47 / JCM 6285 / NBRC 100599), this protein is Xanthine phosphoribosyltransferase.